The chain runs to 412 residues: Adherens junction-associated protein 1 (412 aa).

The first 43 residues, 1–43 (MWIQQLLGLSSMSIRWPGRSLGSHAWILIAMLQLAVDFPSCDS), serve as a signal peptide directing secretion. The Extracellular segment spans residues 44-284 (LGPGPEFRLL…GETSGLAVHQ (241 aa)). Disordered stretches follow at residues 62–175 (LWSL…GRPT) and 243–271 (DPWKRTPVGVSTTEPSTSPSSNGKDIQPP). Residues 121–146 (PPAATRSSPSLASATASSSIVTAGAA) are compositionally biased toward low complexity. Residues 160-171 (HDTEFNDFDFRG) show a composition bias toward basic and acidic residues. The span at 248–263 (TPVGVSTTEPSTSPSS) shows a compositional bias: low complexity. The chain crosses the membrane as a helical span at residues 285 to 305 (IITITVSLIMVIAALITTLVL). The segment at 305–412 (LKNCCAPSGH…VSEKWFEISC (108 aa)) is targeting signals. At 306 to 412 (KNCCAPSGHT…VSEKWFEISC (107 aa)) the chain is on the cytoplasmic side.

In terms of assembly, forms a complex with CDH1 and CTNNB1; interacts directly with CTNNB1. Interacts with AP1M2 and isoform 2 of BSG/CD147.

The protein resides in the basolateral cell membrane. It localises to the apical cell membrane. Its subcellular location is the cell junction. The protein localises to the adherens junction. Functionally, plays a role in cell adhesion and cell migration. This is Adherens junction-associated protein 1 (Ajap1) from Mus musculus (Mouse).